Reading from the N-terminus, the 137-residue chain is MKKWIVLFLVLIAAAISIFVYVSTGSEKPFYNDINLTQYQKEVDSKKPKFIYVYETSCPPCQEIKPELNEVIKKEKLKVQALNIEEKENYNTEFLDKYNLNKTPTILYYKDGKEKDRLEGYRSASQIEKFFDKNGDR.

Residues 1–25 form the signal peptide; sequence MKKWIVLFLVLIAAAISIFVYVSTG. Residues 26-136 enclose the Thioredoxin domain; it reads SEKPFYNDIN…IEKFFDKNGD (111 aa). A disulfide bond links cysteine 58 and cysteine 61.

It belongs to the thioredoxin family.

The protein resides in the secreted. In terms of biological role, unknown; dispensable for production of the lantibiotic sublancin 168 and for competence for DNA uptake. The sequence is that of SPbeta prophage-derived disulfide bond formation protein A (bdbA) from Bacillus subtilis (strain 168).